A 542-amino-acid chain; its full sequence is CTP synthase (542 aa).

An amidoligase domain region spans residues 1–265 (MTRYIFVTGG…DDFVVERFGL (265 aa)). Ser-13 lines the CTP pocket. Ser-13 contributes to the UTP binding site. ATP is bound by residues 14 to 19 (SLGKGI) and Asp-71. The Mg(2+) site is built by Asp-71 and Glu-139. Residues 146–148 (DIE), 186–191 (KTKPTQ), and Lys-222 each bind CTP. UTP-binding positions include 186-191 (KTKPTQ) and Lys-222. In terms of domain architecture, Glutamine amidotransferase type-1 spans 290–541 (TIAMVGKYME…VKAALAQKNK (252 aa)). Gly-351 serves as a coordination point for L-glutamine. The active-site Nucleophile; for glutamine hydrolysis is the Cys-378. L-glutamine is bound by residues 379-382 (LGMQ), Glu-402, and Arg-469. Catalysis depends on residues His-514 and Glu-516.

This sequence belongs to the CTP synthase family. As to quaternary structure, homotetramer.

It catalyses the reaction UTP + L-glutamine + ATP + H2O = CTP + L-glutamate + ADP + phosphate + 2 H(+). It carries out the reaction L-glutamine + H2O = L-glutamate + NH4(+). The catalysed reaction is UTP + NH4(+) + ATP = CTP + ADP + phosphate + 2 H(+). It participates in pyrimidine metabolism; CTP biosynthesis via de novo pathway; CTP from UDP: step 2/2. With respect to regulation, allosterically activated by GTP, when glutamine is the substrate; GTP has no effect on the reaction when ammonia is the substrate. The allosteric effector GTP functions by stabilizing the protein conformation that binds the tetrahedral intermediate(s) formed during glutamine hydrolysis. Inhibited by the product CTP, via allosteric rather than competitive inhibition. Catalyzes the ATP-dependent amination of UTP to CTP with either L-glutamine or ammonia as the source of nitrogen. Regulates intracellular CTP levels through interactions with the four ribonucleotide triphosphates. The polypeptide is CTP synthase (Pseudomonas putida (strain GB-1)).